We begin with the raw amino-acid sequence, 549 residues long: Fas-activated serine/threonine kinase (549 aa).

The interval 1-30 (MRRPRGEPGPRAPRPTEGATCAGPGESWSP) is disordered. Positions 477–535 (VVLVLRERWHFCRDGRVLLGSRALRERHLGLMGYQLLPLPFEELESQRGLPQLKSYLRQ) constitute an RAP domain.

It belongs to the FAST protein kinase family. In terms of assembly, interacts with TIA1; the interactions leads to TIA1 phosphorylation. Interacts with TIAR. Post-translationally, autophosphorylated on serine/threonine residues. Activated by dephosphorylation. As to expression, expressed in heart, brain, placenta, lung, liver, skeletal muscle, kidney and pancreas.

The protein localises to the mitochondrion matrix. It catalyses the reaction L-seryl-[Fas-activated protein] + ATP = O-phospho-L-seryl-[Fas-activated protein] + ADP + H(+). It carries out the reaction L-threonyl-[Fas-activated protein] + ATP = O-phospho-L-threonyl-[Fas-activated protein] + ADP + H(+). The catalysed reaction is L-seryl-[protein] + ATP = O-phospho-L-seryl-[protein] + ADP + H(+). The enzyme catalyses L-threonyl-[protein] + ATP = O-phospho-L-threonyl-[protein] + ADP + H(+). Its function is as follows. Phosphorylates the splicing regulator TIA1, thereby promoting the inclusion of FAS exon 6, which leads to an mRNA encoding a pro-apoptotic form of the receptor. Required for the biogenesis of some mitochondrial-encoded mRNAs, specifically stabilizes ND6 (NADH dehydrogenase complex subunit 6) mRNA, and regulates its levels. The sequence is that of Fas-activated serine/threonine kinase (FASTK) from Homo sapiens (Human).